Here is a 308-residue protein sequence, read N- to C-terminus: Aspartate carbamoyltransferase catalytic subunit (308 aa).

The carbamoyl phosphate site is built by R49 and T50. K77 contributes to the L-aspartate binding site. The carbamoyl phosphate site is built by R99, H127, and Q130. L-aspartate contacts are provided by R160 and R211. Residues A252 and P253 each contribute to the carbamoyl phosphate site.

It belongs to the aspartate/ornithine carbamoyltransferase superfamily. ATCase family. In terms of assembly, heterododecamer (2C3:3R2) of six catalytic PyrB chains organized as two trimers (C3), and six regulatory PyrI chains organized as three dimers (R2).

The enzyme catalyses carbamoyl phosphate + L-aspartate = N-carbamoyl-L-aspartate + phosphate + H(+). It participates in pyrimidine metabolism; UMP biosynthesis via de novo pathway; (S)-dihydroorotate from bicarbonate: step 2/3. Its function is as follows. Catalyzes the condensation of carbamoyl phosphate and aspartate to form carbamoyl aspartate and inorganic phosphate, the committed step in the de novo pyrimidine nucleotide biosynthesis pathway. The sequence is that of Aspartate carbamoyltransferase catalytic subunit from Geobacillus thermodenitrificans (strain NG80-2).